Consider the following 432-residue polypeptide: Adenylosuccinate synthetase (432 aa).

GTP is bound by residues 12-18 and 40-42; these read GDEGKGK and GHT. Catalysis depends on Asp-13, which acts as the Proton acceptor. The Mg(2+) site is built by Asp-13 and Gly-40. Residues 13-16, 38-41, Thr-133, Arg-147, Gln-228, Thr-243, and Arg-307 contribute to the IMP site; these read DEGK and NAGH. The active-site Proton donor is His-41. 303–309 contacts substrate; that stretch reads TTTGRPR. Residues Arg-309, 335 to 337, and 417 to 419 contribute to the GTP site; these read KLD and GVG.

This sequence belongs to the adenylosuccinate synthetase family. As to quaternary structure, homodimer. The cofactor is Mg(2+).

The protein localises to the cytoplasm. It catalyses the reaction IMP + L-aspartate + GTP = N(6)-(1,2-dicarboxyethyl)-AMP + GDP + phosphate + 2 H(+). Its pathway is purine metabolism; AMP biosynthesis via de novo pathway; AMP from IMP: step 1/2. Its function is as follows. Plays an important role in the de novo pathway of purine nucleotide biosynthesis. Catalyzes the first committed step in the biosynthesis of AMP from IMP. This Nocardioides sp. (strain ATCC BAA-499 / JS614) protein is Adenylosuccinate synthetase.